The chain runs to 456 residues: F-box/FBD/LRR-repeat protein At1g13780 (456 aa).

The F-box domain occupies phenylalanine 9 to asparagine 55. LRR repeat units follow at residues leucine 197–arginine 220, alanine 243–serine 266, isoleucine 302–glycine 325, and phenylalanine 355–asparagine 379. Positions methionine 372–phenylalanine 424 constitute an FBD domain.

The chain is F-box/FBD/LRR-repeat protein At1g13780 from Arabidopsis thaliana (Mouse-ear cress).